The primary structure comprises 163 residues: Cyclic pyranopterin monophosphate synthase (163 aa).

Residues 78-80 (LCH) and 116-117 (ME) contribute to the substrate site. Residue Asp131 is part of the active site.

It belongs to the MoaC family. In terms of assembly, homohexamer; trimer of dimers.

It catalyses the reaction (8S)-3',8-cyclo-7,8-dihydroguanosine 5'-triphosphate = cyclic pyranopterin phosphate + diphosphate. Its pathway is cofactor biosynthesis; molybdopterin biosynthesis. Functionally, catalyzes the conversion of (8S)-3',8-cyclo-7,8-dihydroguanosine 5'-triphosphate to cyclic pyranopterin monophosphate (cPMP). The chain is Cyclic pyranopterin monophosphate synthase from Agrobacterium fabrum (strain C58 / ATCC 33970) (Agrobacterium tumefaciens (strain C58)).